The following is a 610-amino-acid chain: Menin (610 aa).

Residues 214–390 (GVAERSWLYL…SLLEAGEERP (177 aa)) are interaction with FANCD2. The interval 460 to 552 (REAEAAEAEE…SPPPEGPVLT (93 aa)) is disordered. A compositionally biased stretch (basic and acidic residues) spans 484 to 500 (RRESKPEEPPPPKKPAL). Residues S487 and S543 each carry the phosphoserine modification. T594 is modified (phosphothreonine).

In terms of assembly, component of the MLL-HCF complex, at least composed of KMT2A/MLL1, MEN1, ASH2L, RBBP5, DPY30, WDR5, HCFC1 and HCFC2. Component of the menin-associated histone methyltransferase complex, at least composed of KMT2B/MLL4, MEN1, ASH2L, RBBP5, DPY30 and WDR5. Interacts with POLR2B. Interacts with POLR2A phosphorylated at 'Ser-5', but not with the unphosphorylated, nor 'Ser-2' phosphorylated POLR2A forms. Interacts with FANCD2 and DBF4. Interacts with SMAD3, but not with SMAD2, nor SMAD4. Directly interacts with NFKB1, NFKB2 and RELA. Interacts with JUND (via MBM motif); inhibits the interaction of JUND with MAPK10 and the phosphorylation of JUND by MAP kinases MAPK8 and MAPK10. Interacts with KMT2A (via MBM motif). The KMT2A-MEN1 complex interacts with PSIP1 with a greater affinity as MEN1 enhances interaction of KMT2A with PSIP1. As to expression, widely expressed, including in the pituitary, brain, large intestine, spleen, kidney, adrenal gland, ovary, testis, thymus, lung, epididymis, bone marrow, pancreatic islets and placenta.

It localises to the nucleus. Functionally, essential component of a MLL/SET1 histone methyltransferase (HMT) complex, a complex that specifically methylates 'Lys-4' of histone H3 (H3K4). Functions as a transcriptional regulator. Binds to the TERT promoter and represses telomerase expression. Represses JUND-mediated transcriptional activation on AP1 sites, as well as that mediated by NFKB subunit RELA. Positively regulates HOXC8 and HOXC6 gene expression. May be involved in normal hematopoiesis through the activation of HOXA9 expression. May be involved in DNA repair. Plays a role in TGFB1-mediated inhibition of cell-proliferation, possibly regulating SMAD3 transcriptional activity. The chain is Menin (Men1) from Rattus norvegicus (Rat).